The following is a 247-amino-acid chain: MEGAEEKKKVPAVPETLKKKRRNFAELKIKRLRKKFAQKMLRKARRKLIYEKAKHYHKEYRQMYRTEIRMARMARKAGNFYVPAEPKLAFVIRIRGINGVSPKVRKVLQLLRLRQIFNGTFVKLNKASINMLRIVEPYIAWGYPNLKSVNELIYKRGYGKINKKRIALTDNALIARSLGKYGIICMEDLIHEICTVGKRFKEANNFLWPFKLSSPRGGMKKKTTHFVEGGDAGNREDQINRLIRRMN.

Position 1 is an N-acetylmethionine (Met1). Tandem repeats lie at residues 7-17 (KKKVPAVPETL), 18-29 (KKKRRNFAELKI), 30-41 (KRLRKKFAQKML), and 42-53 (RKARRKLIYEKA). Residues 7–53 (KKKVPAVPETLKKKRRNFAELKIKRLRKKFAQKMLRKARRKLIYEKA) form a 4 X 12 AA tandem repeats region. Phosphothreonine is present on Thr16. Lys123 carries the N6-acetyllysine modification. Residue Lys126 is modified to N6-succinyllysine. Tyr138 bears the Phosphotyrosine mark.

The protein belongs to the universal ribosomal protein uL30 family. As to quaternary structure, component of the large ribosomal subunit. Homodimer. Interacts with DHX33.

It is found in the cytoplasm. Component of the large ribosomal subunit. The ribosome is a large ribonucleoprotein complex responsible for the synthesis of proteins in the cell. Binds to G-rich structures in 28S rRNA and in mRNAs. Plays a regulatory role in the translation apparatus; inhibits cell-free translation of mRNAs. In Macaca fascicularis (Crab-eating macaque), this protein is Large ribosomal subunit protein uL30 (RPL7).